Reading from the N-terminus, the 341-residue chain is MTENNRAGAVPLSSILLQMITGYWVTQSLYVAAKLGIADLVADAPKPIEELAAKTGAKAPLLKRVLRTIASIGVFTETEPGIFGITPLAALLRSGTPDSMRPQAIMHGEEQYRAWADVLHNVQTGETAFEKEFGTSYFGYLAKHPEADRVFNEAQAGYTKQVAHAVVDAYDFSPFKTVIDIGAGYGPLLSAILRSQPEARGILFDQPHVAQAAGKRLAEAGVGDRCGTVGGDFFVEVPADGDVYILSLLLHDWDDQRSIEILRNCRRAMPAHGKLLIVELVLPEGEEPFFGKWLDLHMLVLLGAQERTADEFKTLFAASGFALERVLPTASGLSIVEARPI.

S-adenosyl-L-methionine contacts are provided by residues aspartate 205 and 231 to 233 (GDF). Histidine 251 serves as the catalytic Proton acceptor.

This sequence belongs to the class I-like SAM-binding methyltransferase superfamily. Cation-independent O-methyltransferase family. Homodimer.

The enzyme catalyses 1,6-dihydroxyphenazine + S-adenosyl-L-methionine = 1-hydroxy-6-methoxyphenazine + S-adenosyl-L-homocysteine + H(+). It carries out the reaction 1-hydroxy-6-methoxyphenazine + S-adenosyl-L-methionine = 1,6-dimethoxyphenazine + S-adenosyl-L-homocysteine + H(+). It catalyses the reaction 1-hydroxy-6-methoxyphenazine N(10)-oxide + S-adenosyl-L-methionine = 1,6-dimethoxyphenazine N(5)-oxide + S-adenosyl-L-homocysteine. The catalysed reaction is 1,6-dihydroxyphenazine N(5),N(10)-dioxide + S-adenosyl-L-methionine = 1-hydroxy-6-methoxyphenazine N(5),N(10)-dioxide + S-adenosyl-L-homocysteine. The enzyme catalyses 1-hydroxy-6-methoxyphenazine N(5),N(10)-dioxide + S-adenosyl-L-methionine = 1,6-dimethoxyphenazine N(5),N(10)-dioxide + S-adenosyl-L-homocysteine. Its function is as follows. Involved in the biosynthesis of phenazine natural products including myxin, an N(5),N(10)-dioxide phenazine antiobiotic, which has antimicrobial activity. O-methyltransferase, which converts iodinin (1,6-dihydroxyphenazine N(5),N(10)-dioxide) to myxin (1-hydroxy-6-methoxyphenazine N(5),N(10)-dioxide). Catalyzes both monomethoxy and dimethoxy formation of phenazine natural compounds. Acts on a wide variety of substrates, catalyzing O-methylation of phenazines with non-, mono- or di-N-oxide. Highest activity with 1,6-dihydroxyphenazine (DHP) as substrate. Less active with monohydroxy-containing and monohydroxy-monomethoxy-containing phenazines. Least active with non-phenazine substrates, such as 8-hydroxyquinoline and 6-hydroxyquinoline. Is not able to convert 1-hydroxyphenazine to 1-hydroxy-N5-methylphenazine (pyocyanine), hence does not function as an N-methyltransferase. This is Phenazine O-methyltransferase PhzM from Lysobacter antibioticus.